The chain runs to 376 residues: DNA methyltransferase CcrM (376 aa).

Residues 273–370 (KATLSVMTGK…IDELRSVIRN (98 aa)) form the RAMA domain.

This sequence belongs to the N(4)/N(6)-methyltransferase family.

The catalysed reaction is a 2'-deoxyadenosine in DNA + S-adenosyl-L-methionine = an N(6)-methyl-2'-deoxyadenosine in DNA + S-adenosyl-L-homocysteine + H(+). Functionally, a beta subtype methylase that recognizes the double-stranded sequence 5'-GANTC-3' and methylates A-2 on both strands. Overexpression leads to many branched and bloated cells, two to three times the size of wild-type cells, and cells that have 1-3 times the normal amount of DNA. Contributes to the accurate cell-cycle control of DNA replication and cellular morphology. Can fully replace its ortholog in C.crescentus. The sequence is that of DNA methyltransferase CcrM (smeIM) from Rhizobium meliloti (strain 1021) (Ensifer meliloti).